Consider the following 670-residue polypeptide: Methionine--tRNA ligase (670 aa).

The 'HIGH' region signature appears at 14 to 24 (PYANGHLHLGH). The Zn(2+) site is built by Cys-145, Cys-148, Cys-158, and Cys-161. The 'KMSKS' region motif lies at 330-334 (KMSKS). Position 333 (Lys-333) interacts with ATP. The region spanning 570-670 (DFAKVDLRIA…AGALPGMKVK (101 aa)) is the tRNA-binding domain.

Belongs to the class-I aminoacyl-tRNA synthetase family. MetG type 1 subfamily. In terms of assembly, homodimer. The cofactor is Zn(2+).

The protein resides in the cytoplasm. It carries out the reaction tRNA(Met) + L-methionine + ATP = L-methionyl-tRNA(Met) + AMP + diphosphate. In terms of biological role, is required not only for elongation of protein synthesis but also for the initiation of all mRNA translation through initiator tRNA(fMet) aminoacylation. This chain is Methionine--tRNA ligase, found in Legionella pneumophila subsp. pneumophila (strain Philadelphia 1 / ATCC 33152 / DSM 7513).